Consider the following 594-residue polypeptide: MASGANVTDNKQQTPQESDTLKRVWAYLKPEKRNFVLAIIAMGLVAASEGIIPKVVNDLLDKGFGGSYAGKLWHVPALLVGVALVRGLAQFASGYLLSQISNGVLLKMRMQMFDRMLHAPALFFHRNTAASLINAVIFEVNQVMQILTGVLITLVRDSLTVVALLIYLFYTNWKLTLVVAVLLPAIGFVMSKVNRRLRRLNREHQALTNTAAYVVEESVGGFKVVKLHGGEAYEMSRFEAMAERLRGYSMRMAVAGGLNQPVTAFLASLALSVILTIAMIQAQGNQTTIGGFTGFVMAMLLLISPLKHLADLNQPLQRGLTAAEMIFGLIDEPIEPQNGGLPLERARGDLVFDNVGFRYGDAARAALNHVSLRAAPGEVVALVGPSGSGKTTLVNLVPRFFDPTEGHILLDGQPIDRFALADLRRQIAFVSQDVVLFNDTVAANVAYGVHPREKIDMARVERALAAAYLTDVVKGLPEGLETNIGDNGMKLSGGQRQRLAIARAIYKDAPILILDEATSALDSESERQVQAALESLMVGRTTLVIAHRLSTIENADRIVVLEQGRVAEQGSHAELIGKNGLYAGLHRIQFASQA.

6 helical membrane passes run 35–55, 64–84, 135–155, 161–181, 262–282, and 289–309; these read FVLAIIAMGLVAASEGIIPKV, FGGSYAGKLWHVPALLVGVAL, AVIFEVNQVMQILTGVLITLV, VVALLIYLFYTNWKLTLVVAV, VTAFLASLALSVILTIAMIQA, and IGGFTGFVMAMLLLISPLKHL. Positions 36–318 constitute an ABC transmembrane type-1 domain; it reads VLAIIAMGLV…LADLNQPLQR (283 aa). Positions 350–588 constitute an ABC transporter domain; sequence LVFDNVGFRY…NGLYAGLHRI (239 aa). 384–391 contacts ATP; it reads GPSGSGKT.

Belongs to the ABC transporter superfamily. Lipid exporter (TC 3.A.1.106) family. Homodimer.

The protein resides in the cell inner membrane. The enzyme catalyses ATP + H2O + lipid A-core oligosaccharideSide 1 = ADP + phosphate + lipid A-core oligosaccharideSide 2.. Functionally, involved in lipopolysaccharide (LPS) biosynthesis. Translocates lipid A-core from the inner to the outer leaflet of the inner membrane. Transmembrane domains (TMD) form a pore in the inner membrane and the ATP-binding domain (NBD) is responsible for energy generation. This Cupriavidus metallidurans (strain ATCC 43123 / DSM 2839 / NBRC 102507 / CH34) (Ralstonia metallidurans) protein is ATP-dependent lipid A-core flippase.